Here is an 898-residue protein sequence, read N- to C-terminus: Serine/threonine-protein kinase TAO3 (898 aa).

The region spanning 24–277 is the Protein kinase domain; that stretch reads FIGLHEIGHG…SAELLRHDFV (254 aa). ATP-binding positions include 30–38 and K53; that span reads IGHGSFGAV. D147 functions as the Proton acceptor in the catalytic mechanism. 2 disordered regions span residues 316 to 362 and 405 to 425; these read TRNG…SQSS and DEAG…VQSQ. S324 bears the Phosphoserine; by ATM mark. A phosphoserine mark is found at S331, S343, S346, and S349. The span at 334 to 351 shows a compositional bias: polar residues; the sequence is GTSLNREMDSLGSNHSIP. The span at 352–362 shows a compositional bias: low complexity; the sequence is SMSVSTGSQSS. A Phosphothreonine modification is found at T357. S359 carries the phosphoserine modification. Residues 405-416 show a composition bias toward basic and acidic residues; it reads DEAGHGDPRPEP. Position 442 is a phosphoserine (S442). Coiled-coil stretches lie at residues 452 to 502, 548 to 649, and 754 to 879; these read EQEN…THAN, FLES…HAML, and LKTL…DMES. Residues 565 to 596 form a disordered region; the sequence is EEMNEDHSTPKKEKQERISKHKENLQHTQAEE. K830 is subject to N6-acetyllysine.

Belongs to the protein kinase superfamily. STE Ser/Thr protein kinase family. STE20 subfamily. As to quaternary structure, self-associates. Interacts with ERN1 and TRAF2. Interaction with TRAF2 is facilitated under ER stress conditions, such as treatment with tunicamycin, and may promote TRAF2 phosphorylation. Interacts (via N-terminus) with STK25; the interaction promotes STK25 abundance at the level of protein expression and/or stability. In terms of processing, autophosphorylated. Phosphorylation at Ser-324 by ATM following DNA damage is required for activation of the p38/MAPK14 stress-activated MAPK cascade. Phosphorylated at Ser-324 and on Tyr residues during T cell activation. Phosphorylated by LRRK2.

It is found in the cytoplasm. It localises to the cell membrane. The protein localises to the membrane raft. Its subcellular location is the lipid droplet. The catalysed reaction is L-seryl-[protein] + ATP = O-phospho-L-seryl-[protein] + ADP + H(+). The enzyme catalyses L-threonyl-[protein] + ATP = O-phospho-L-threonyl-[protein] + ADP + H(+). In terms of biological role, serine/threonine-protein kinase that acts as a regulator of the p38/MAPK14 stress-activated MAPK cascade and of the MAPK8/JNK cascade. In response to DNA damage, involved in the G2/M transition DNA damage checkpoint by activating the p38/MAPK14 stress-activated MAPK cascade, probably by mediating phosphorylation of upstream MAP2K3 and MAP2K6 kinases. Inhibits basal activity of the MAPK8/JNK cascade and diminishes its activation in response to epidermal growth factor (EGF). Positively regulates canonical T cell receptor (TCR) signaling by preventing early PTPN6/SHP1-mediated inactivation of LCK, ensuring sustained TCR signaling that is required for optimal activation and differentiation of T cells. Phosphorylates PTPN6/SHP1 on 'Thr-394', leading to its polyubiquitination and subsequent proteasomal degradation. Required for cell surface expression of metalloprotease ADAM10 on type 1 transitional B cells which is necessary for their NOTCH-mediated development into marginal zone B cells. Also required for the NOTCH-mediated terminal differentiation of splenic conventional type 2 dendritic cells. Positively regulates osteoblast differentiation by acting as an upstream activator of the JNK pathway. Promotes JNK signaling in hepatocytes and positively regulates hepatocyte lipid storage by inhibiting beta-oxidation and triacylglycerol secretion while enhancing lipid synthesis. Restricts age-associated inflammation by negatively regulating differentiation of macrophages and their production of pro-inflammatory cytokines. Plays a role in negatively regulating the abundance of regulatory T cells in white adipose tissue. The protein is Serine/threonine-protein kinase TAO3 (TAOK3) of Pongo abelii (Sumatran orangutan).